The following is a 482-amino-acid chain: MKGLFLRIITALALLFWAIDMVFPWQFLRHTEENHYTAIQARGSLYVGTINNQISYFINKDSERGFEYELAKAFADTLGVELEMKIFDNQEQLFDELDKHNIDLAAAHLLYHPKNAERFQIGPAYHSASWQLAYRKNENRPKNLGNVKKDIYISNNLALEETLKELQKQYPQLTWKRNQALTQEELLLQLAEGKIPYVIANSIDIAAIQQIKPELAIAFDITDEANVHWYLPNSPYRDLQTALLNFMNNAEETGLLDNLKEKYLGHISQFDYVDTRSYMNAIENTLPQFSPLFEKYKGELDWRLLAAVAYQESHWNPDATSPTGVRGIMMLTKNTAQHMKISDRTDPEQSIKAGSEYLHWLISQLPESIEKEERIWFALVAYNIGLGHLIDARRLTQNLGGNPDNWLNVKKNLPLLAEKRYYSQLKYGYARGYEAYQYVENIRRYMNSIVNYHRVQENQTTNDNANNESAVKNLEEIKENKD.

A signal peptide spans 1-18 (MKGLFLRIITALALLFWA). Residues 19–267 (IDMVFPWQFL…NLKEKYLGHI (249 aa)) are non-LT domain. Positions 268–482 (SQFDYVDTRS…NLEEIKENKD (215 aa)) are LT domain. Glu-312 is a catalytic residue. The segment covering 457–470 (ENQTTNDNANNESA) has biased composition (polar residues). Residues 457–482 (ENQTTNDNANNESAVKNLEEIKENKD) form a disordered region. Positions 473–482 (NLEEIKENKD) are enriched in basic and acidic residues.

This sequence in the N-terminal section; belongs to the bacterial solute-binding protein 3 family. The protein in the C-terminal section; belongs to the transglycosylase Slt family.

Its subcellular location is the cell outer membrane. It carries out the reaction Exolytic cleavage of the (1-&gt;4)-beta-glycosidic linkage between N-acetylmuramic acid (MurNAc) and N-acetylglucosamine (GlcNAc) residues in peptidoglycan, from either the reducing or the non-reducing ends of the peptidoglycan chains, with concomitant formation of a 1,6-anhydrobond in the MurNAc residue.. In terms of biological role, murein-degrading enzyme that degrades murein glycan strands and insoluble, high-molecular weight murein sacculi, with the concomitant formation of a 1,6-anhydromuramoyl product. Lytic transglycosylases (LTs) play an integral role in the metabolism of the peptidoglycan (PG) sacculus. Their lytic action creates space within the PG sacculus to allow for its expansion as well as for the insertion of various structures such as secretion systems and flagella. In Haemophilus influenzae (strain 86-028NP), this protein is Membrane-bound lytic murein transglycosylase F.